Reading from the N-terminus, the 238-residue chain is Ribonuclease PH (238 aa).

Phosphate is bound by residues Arg86 and 124-126; that span reads GTR.

Belongs to the RNase PH family. In terms of assembly, homohexameric ring arranged as a trimer of dimers.

The enzyme catalyses tRNA(n+1) + phosphate = tRNA(n) + a ribonucleoside 5'-diphosphate. Functionally, phosphorolytic 3'-5' exoribonuclease that plays an important role in tRNA 3'-end maturation. Removes nucleotide residues following the 3'-CCA terminus of tRNAs; can also add nucleotides to the ends of RNA molecules by using nucleoside diphosphates as substrates, but this may not be physiologically important. Probably plays a role in initiation of 16S rRNA degradation (leading to ribosome degradation) during starvation. This is Ribonuclease PH from Vibrio cholerae serotype O1 (strain ATCC 39315 / El Tor Inaba N16961).